The primary structure comprises 580 residues: Mucolipin-1 (580 aa).

Residues 1 to 38 are disordered; it reads MATPAGRRASETERLLTPNPGYGTQVGTSPAPTTPTEE. Topologically, residues 1–65 are cytoplasmic; it reads MATPAGRRAS…FRAKGRKPCK (65 aa). Ser-10 carries the post-translational modification Phosphoserine. Positions 11–16 match the Dileucine motif; mediates targeting to lysosomes motif; sequence ETERLL. The interval 42 to 62 is interaction with phosphoinositides; that stretch reads RRRLKYFFMSPCDKFRAKGRK. A helical transmembrane segment spans residues 66-86; that stretch reads LMLQVVKILVVTVQLILFGLS. Topologically, residues 87-298 are extracellular; that stretch reads NQLVVTFREE…VSRHGDNSFR (212 aa). The extracellular/lumenal pore loop stretch occupies residues 107-121; sequence LGYSDGSDDTFAAYT. A disulfide bridge connects residues Cys-166 and Cys-192. N-linked (GlcNAc...) asparagine glycans are attached at residues Asn-220 and Asn-230. An intrachain disulfide couples Cys-253 to Cys-284. Residues 299 to 321 form a helical membrane-spanning segment; sequence LLFDVVVILTCSLSFLLCARSLL. Over 322–350 the chain is Cytoplasmic; that stretch reads RGFLLQNEFVVFMWRRRGREISLWERLEF. A helical membrane pass occupies residues 351–371; sequence VNGWYILLVTSDVLTISGTVM. Residues 372-382 are Extracellular-facing; that stretch reads KIGIEAKNLAS. Residues 383–405 form a helical membrane-spanning segment; that stretch reads YDVCSILLGTSTLLVWVGVIRYL. The Cytoplasmic portion of the chain corresponds to 406–427; it reads TFFHKYNILIATLRVALPSVMR. A helical membrane pass occupies residues 428-448; it reads FCCCVAVIYLGYCFCGWIVLG. Over 449–456 the chain is Extracellular; it reads PYHVKFRS. The segment at residues 457-477 is an intramembrane region (pore-forming); sequence LSMVSECLFSLINGDDMFVTF. Residues 469–474 carry the Selectivity filter motif; the sequence is NGDDMF. Residues 478 to 491 lie on the Extracellular side of the membrane; it reads AAMQAQQGHSSLVW. Residues 492-513 traverse the membrane as a helical segment; the sequence is LFSQLYLYSFISLFIYMVLSLF. Topologically, residues 514 to 580 are cytoplasmic; it reads IALITGAYDT…SPEDHSLLVN (67 aa). Ser-557 is modified (phosphoserine). Ser-559 carries the post-translational modification Phosphoserine; by PAK. Residues 565–567 form a required for palmitoylation and association with membranes region; that stretch reads CCC. Residues 573-578 carry the Dileucine internalization motif; mediates AP2 complex-dependent internalization motif; that stretch reads EDHSLL.

The protein belongs to the transient receptor (TC 1.A.4) family. Polycystin subfamily. MCOLN1 sub-subfamily. In terms of assembly, homotetramer. Homooligomer. Can heterooligomerize with MCOLN2 or MCOLN3; heteromeric assemblies have different channel properties as compared to the respective homooligomers and may be tissue-specific. Interacts with PDCD6. Interacts with TMEM163. Interacts with LAPTM4B. Palmitoylated; involved in association with membranes. Post-translationally, phosphorylation by PKA inhibits channel activity. Dephosphorylation increases activity. In terms of processing, proteolytically cleaved probably involving multiple lysosomal proteases including cathepsin B; inhibits lysosomal channel activity. Widely expressed, with the highest expression in brain, liver and kidney.

The protein localises to the late endosome membrane. Its subcellular location is the lysosome membrane. The protein resides in the cytoplasmic vesicle membrane. It localises to the cell projection. It is found in the phagocytic cup. The protein localises to the cytoplasmic vesicle. Its subcellular location is the phagosome membrane. The protein resides in the cell membrane. The enzyme catalyses Ca(2+)(in) = Ca(2+)(out). The catalysed reaction is Fe(2+)(in) = Fe(2+)(out). It catalyses the reaction Mg(2+)(in) = Mg(2+)(out). It carries out the reaction K(+)(in) = K(+)(out). The enzyme catalyses Na(+)(in) = Na(+)(out). With respect to regulation, channel activity is controlled by multiple regulatory mechanisms in different subcellular compartments. Lower pH by itself has an inhibitory effect on channel conductance. Channel function is transiently modulated by changes in Ca(2+) in a pH-dependent manner; pH changes modify the aggregation state of unitary channels; a negative cooperativity between extracellular/lumenal Ca(2+) and H(+) is suggested. Fe(2+) channel activity is potentiated by low pH. Regulated by phosphoinositides in a compartment-specific manner: in lysosomes activated by PtdIns(3,5)P2 (Phosphatidylinositol 3,5-bisphosphate) and at the plasma membrane inhibited by PtdIns(4,5)P2 (Phosphatidylinositol 4,5-bisphosphate). Its function is as follows. Nonselective cation channel probably playing a role in the regulation of membrane trafficking events and of metal homeostasis. Acts as a Ca(2+)-permeable cation channel with inwardly rectifying activity. Proposed to play a major role in Ca(2+) release from late endosome and lysosome vesicles to the cytoplasm, which is important for many lysosome-dependent cellular events, including the fusion and trafficking of these organelles, exocytosis and autophagy. Required for efficient uptake of large particles in macrophages in which Ca(2+) release from the lysosomes triggers lysosomal exocytosis. May also play a role in phagosome-lysosome fusion. Involved in lactosylceramide trafficking indicative for a role in the regulation of late endocytic membrane fusion/fission events. By mediating lysosomal Ca(2+) release is involved in regulation of mTORC1 signaling and in mTOR/TFEB-dependent lysosomal adaptation to environmental cues such as nutrient levels. Seems to act as lysosomal active oxygen species (ROS) sensor involved in ROS-induced TFEB activation and autophagy. Also functions as a Fe(2+) permeable channel in late endosomes and lysosomes. Also permeable to Mg(2+), Na(+). K(+) and Cs(+). Proposed to play a role in zinc homeostasis probably implicating its association with TMEM163. In adaptive immunity, TRPML2 and TRPML1 may play redundant roles in the function of the specialized lysosomes of B cells. May contribute to cellular lipase activity within the late endosomal pathway or at the cell surface which may be involved in processes of membrane reshaping and vesiculation, especially the growth of tubular structures. However, it is not known, whether it conveys the enzymatic activity directly, or merely facilitates the activity of an associated phospholipase. This is Mucolipin-1 from Mus musculus (Mouse).